A 324-amino-acid chain; its full sequence is Acetyl-coenzyme A carboxylase carboxyl transferase subunit alpha (324 aa).

The region spanning 44 to 298 is the CoA carboxyltransferase C-terminal domain; it reads RFQDKLTKLQ…RKELIKQLNI (255 aa).

This sequence belongs to the AccA family. Acetyl-CoA carboxylase is a heterohexamer composed of biotin carboxyl carrier protein (accB), biotin carboxylase (accC) and two subunits each of ACCase subunit alpha (accA) and ACCase subunit beta (accD).

Its subcellular location is the plastid. The protein resides in the chloroplast. It carries out the reaction N(6)-carboxybiotinyl-L-lysyl-[protein] + acetyl-CoA = N(6)-biotinyl-L-lysyl-[protein] + malonyl-CoA. The protein operates within lipid metabolism; malonyl-CoA biosynthesis; malonyl-CoA from acetyl-CoA: step 1/1. Functionally, component of the acetyl coenzyme A carboxylase (ACC) complex. First, biotin carboxylase catalyzes the carboxylation of biotin on its carrier protein (BCCP) and then the CO(2) group is transferred by the carboxyltransferase to acetyl-CoA to form malonyl-CoA. The polypeptide is Acetyl-coenzyme A carboxylase carboxyl transferase subunit alpha (Porphyra purpurea (Red seaweed)).